An 83-amino-acid chain; its full sequence is Sec-independent protein translocase protein TatA (83 aa).

Residues 1–21 (MGNMGIWQLLIIAVIVILLFG) traverse the membrane as a helical segment. 2 stretches are compositionally biased toward basic and acidic residues: residues 47-57 (EEKKALEETAS) and 71-83 (AEKK…KEQV). Positions 47–83 (EEKKALEETASEKATPSVEKTAPNAEKKTETKDKEQV) are disordered.

The protein belongs to the TatA/E family. As to quaternary structure, the Tat system comprises two distinct complexes: a TatABC complex, containing multiple copies of TatA, TatB and TatC subunits, and a separate TatA complex, containing only TatA subunits. Substrates initially bind to the TatABC complex, which probably triggers association of the separate TatA complex to form the active translocon.

The protein resides in the cell inner membrane. Part of the twin-arginine translocation (Tat) system that transports large folded proteins containing a characteristic twin-arginine motif in their signal peptide across membranes. TatA could form the protein-conducting channel of the Tat system. This chain is Sec-independent protein translocase protein TatA, found in Shewanella woodyi (strain ATCC 51908 / MS32).